The sequence spans 48 residues: Small, acid-soluble spore protein P (48 aa).

Positions 1–19 (MTNKNTGKDIRQNSPKEHQ) are enriched in basic and acidic residues. Residues 1–48 (MTNKNTGKDIRQNSPKEHQSGQPEPLSGSKKVKNRNHTRQKHNSHHDM) are disordered. Residues 30–48 (KKVKNRNHTRQKHNSHHDM) show a composition bias toward basic residues.

The protein belongs to the SspP family.

It localises to the spore core. The polypeptide is Small, acid-soluble spore protein P (Bacillus pumilus (strain SAFR-032)).